A 234-amino-acid polypeptide reads, in one-letter code: Endonuclease NucS (234 aa).

The protein belongs to the NucS endonuclease family.

It is found in the cytoplasm. In terms of biological role, cleaves both 3' and 5' ssDNA extremities of branched DNA structures. The protein is Endonuclease NucS of Bifidobacterium adolescentis (strain ATCC 15703 / DSM 20083 / NCTC 11814 / E194a).